The sequence spans 236 residues: Small ribosomal subunit protein uS3 (236 aa).

The KH type-2 domain occupies 39-107; that stretch reads IRKFLKREMY…EVFINIKEAK (69 aa). Positions 214-229 are enriched in basic and acidic residues; sequence PEKKEESKSGDKEVRS. A disordered region spans residues 214-236; it reads PEKKEESKSGDKEVRSKSRRGRQ.

Belongs to the universal ribosomal protein uS3 family. As to quaternary structure, part of the 30S ribosomal subunit. Forms a tight complex with proteins S10 and S14.

Its function is as follows. Binds the lower part of the 30S subunit head. Binds mRNA in the 70S ribosome, positioning it for translation. In Helicobacter hepaticus (strain ATCC 51449 / 3B1), this protein is Small ribosomal subunit protein uS3.